The primary structure comprises 533 residues: Beta-1,4 N-acetylgalactosaminyltransferase 1 (533 aa).

Residues 1–7 (MRLDRRA) are Cytoplasmic-facing. A helical; Signal-anchor for type II membrane protein transmembrane segment spans residues 8–25 (LYALVLLLACASLGLLYA). The Lumenal segment spans residues 26-533 (STRDAPGLPN…KHRLQCMTAE (508 aa)). Residues Asn-79 and Asn-274 are each glycosylated (N-linked (GlcNAc...) asparagine). Residues Cys-429 and Cys-476 are joined by a disulfide bond.

This sequence belongs to the glycosyltransferase 2 family. As to quaternary structure, homodimer; disulfide-linked. In terms of tissue distribution, strongly expressed in brain, testis, spleen, and to a lesser extent in liver.

It is found in the golgi apparatus membrane. The catalysed reaction is a ganglioside GM3 (d18:1(4E)) + UDP-N-acetyl-alpha-D-galactosamine = a ganglioside GM2 (d18:1(4E)) + UDP + H(+). It catalyses the reaction a ganglioside GD3 (d18:1(4E)) + UDP-N-acetyl-alpha-D-galactosamine = a ganglioside GD2 (d18:1(4E)) + UDP + H(+). The enzyme catalyses a ganglioside GM3 + UDP-N-acetyl-alpha-D-galactosamine = a ganglioside GM2 + UDP + H(+). It carries out the reaction a ganglioside GD3 + UDP-N-acetyl-alpha-D-galactosamine = a ganglioside GD2 + UDP + H(+). The catalysed reaction is a ganglioside GD1a + UDP-N-acetyl-alpha-D-galactosamine = a ganglioside GalNAc-GD1a + UDP + H(+). It catalyses the reaction a ganglioside GT3 (d18:1(4E)) + UDP-N-acetyl-alpha-D-galactosamine = a ganglioside GT2 (d18:1(4E)) + UDP + H(+). The enzyme catalyses a beta-D-Gal-(1-&gt;4)-beta-D-Glc-(1&lt;-&gt;1)-Cer(d18:1(4E)) + UDP-N-acetyl-alpha-D-galactosamine = a ganglioside GA2 (d18:1(4E)) + UDP + H(+). It carries out the reaction a neolactoside IV(3)-alpha-NeuGc-nLc4Cer + UDP-N-acetyl-alpha-D-galactosamine = a neolactoside IV(4)-beta-GalNAc-IV(3)-alpha-NeuGc-nLc4Cer + UDP + H(+). It functions in the pathway sphingolipid metabolism. Functionally, involved in the biosynthesis of gangliosides GM2, GD2, GT2 and GA2 from GM3, GD3, GT3 and GA3, respectively. The sequence is that of Beta-1,4 N-acetylgalactosaminyltransferase 1 from Rattus norvegicus (Rat).